The sequence spans 677 residues: DNA gyrase subunit B, novobiocin-resistant (677 aa).

Residues 1–23 (MTTYDTRTATDTRGSEQPGHVGT) form a disordered region. A novobiocin-binding region spans residues 154–295 (IWTDGHRWTQ…RLLSAEIALQ (142 aa)). The 115-residue stretch at 456–570 (SEIFIVEGDS…EGHVHLSRPP (115 aa)) folds into the Toprim domain. Positions 462, 535, and 537 each coordinate Mg(2+).

Belongs to the type II topoisomerase GyrB family. In terms of assembly, heterotetramer, composed of two GyrA and two GyrB chains. In the heterotetramer, GyrA contains the active site tyrosine that forms a transient covalent intermediate with DNA, while GyrB binds cofactors and catalyzes ATP hydrolysis. The cofactor is Mg(2+). Requires Mn(2+) as cofactor. It depends on Ca(2+) as a cofactor.

It localises to the cytoplasm. It catalyses the reaction ATP-dependent breakage, passage and rejoining of double-stranded DNA.. A type II topoisomerase that negatively supercoils closed circular double-stranded (ds) DNA in an ATP-dependent manner to modulate DNA topology and maintain chromosomes in an underwound state. Negative supercoiling favors strand separation, and DNA replication, transcription, recombination and repair, all of which involve strand separation. Also able to catalyze the interconversion of other topological isomers of dsDNA rings, including catenanes and knotted rings. Type II topoisomerases break and join 2 DNA strands simultaneously in an ATP-dependent manner. The protein is DNA gyrase subunit B, novobiocin-resistant of Streptomyces niveus (Streptomyces spheroides).